Consider the following 192-residue polypeptide: uncharacterized protein (192 aa).

The B12-binding domain maps to 72 to 192 (GATVLLIVPP…SLVISEFSLV (121 aa)).

This is an uncharacterized protein from Rhodobacter capsulatus (Rhodopseudomonas capsulata).